The chain runs to 360 residues: Alanine racemase (360 aa).

Lys-36 serves as the catalytic Proton acceptor; specific for D-alanine. An N6-(pyridoxal phosphate)lysine modification is found at Lys-36. Substrate is bound at residue Arg-132. Tyr-256 functions as the Proton acceptor; specific for L-alanine in the catalytic mechanism. Met-304 provides a ligand contact to substrate.

The protein belongs to the alanine racemase family. Pyridoxal 5'-phosphate serves as cofactor.

It catalyses the reaction L-alanine = D-alanine. Its pathway is amino-acid biosynthesis; D-alanine biosynthesis; D-alanine from L-alanine: step 1/1. Its function is as follows. Catalyzes the interconversion of L-alanine and D-alanine. May also act on other amino acids. This Haemophilus influenzae (strain ATCC 51907 / DSM 11121 / KW20 / Rd) protein is Alanine racemase (alr).